The chain runs to 426 residues: MKQLRLEPVVQVRGEINIPGSKSISNRALLLATLAQGTTTLTNLLDSDDIRHMLASLKQLGVEYRLSHNNTVCELAGLGGVMSSKQAQTLFLGNAGTAMRPLCAALTLGQGEFTLTGEPRMEERPIGDLVDALRQLGANIVYLKNDGFPPLTINATGLNGGDVEIVGDLSSQFLTALLMVAPLAKGSVNIHVKGELVSKPYIDITLALMAQFGVKVINHHYARFEIPAGQHYVSPGKVLVEGDASSASYFLAAGAIKGGEVKVTGVGRLSIQGDVKFADVLEKMGADIEWGDDYIIARGAPLTAVDLDMNHIPDAAMTIATAALFAKGTTVIRNIYNWRIKETDRLAAMATELRKVGAEVEEGNDYIKITPPAVLNTAQIDTYNDHRMAMCFSMLAFADCGITINDPDCTSKTFPDYFVQFASLKV.

The 3-phosphoshikimate site is built by Lys22, Ser23, and Arg27. Residue Lys22 coordinates phosphoenolpyruvate. Residues Gly96 and Arg124 each coordinate phosphoenolpyruvate. 3-phosphoshikimate contacts are provided by Ser170, Ser171, Gln172, Ser198, Asp314, Asn337, and Lys341. Gln172 serves as a coordination point for phosphoenolpyruvate. The active-site Proton acceptor is the Asp314. Positions 345, 387, and 412 each coordinate phosphoenolpyruvate.

The protein belongs to the EPSP synthase family. Monomer.

It localises to the cytoplasm. The enzyme catalyses 3-phosphoshikimate + phosphoenolpyruvate = 5-O-(1-carboxyvinyl)-3-phosphoshikimate + phosphate. The protein operates within metabolic intermediate biosynthesis; chorismate biosynthesis; chorismate from D-erythrose 4-phosphate and phosphoenolpyruvate: step 6/7. Its function is as follows. Catalyzes the transfer of the enolpyruvyl moiety of phosphoenolpyruvate (PEP) to the 5-hydroxyl of shikimate-3-phosphate (S3P) to produce enolpyruvyl shikimate-3-phosphate and inorganic phosphate. The chain is 3-phosphoshikimate 1-carboxyvinyltransferase from Shewanella oneidensis (strain ATCC 700550 / JCM 31522 / CIP 106686 / LMG 19005 / NCIMB 14063 / MR-1).